Here is a 745-residue protein sequence, read N- to C-terminus: Phosphoribosylformylglycinamidine synthase subunit PurL (745 aa).

The active site involves histidine 54. ATP is bound by residues tyrosine 57 and lysine 96. Glutamate 98 contacts Mg(2+). Residues 99 to 102 (SHNH) and arginine 121 each bind substrate. Histidine 100 acts as the Proton acceptor in catalysis. Residue aspartate 122 coordinates Mg(2+). Glutamine 250 provides a ligand contact to substrate. Mg(2+) is bound at residue aspartate 278. 322–324 (ESQ) is a binding site for substrate. 2 residues coordinate ATP: aspartate 503 and glycine 540. A Mg(2+)-binding site is contributed by asparagine 541. Residue serine 543 coordinates substrate.

The protein belongs to the FGAMS family. As to quaternary structure, monomer. Part of the FGAM synthase complex composed of 1 PurL, 1 PurQ and 2 PurS subunits.

The protein localises to the cytoplasm. It carries out the reaction N(2)-formyl-N(1)-(5-phospho-beta-D-ribosyl)glycinamide + L-glutamine + ATP + H2O = 2-formamido-N(1)-(5-O-phospho-beta-D-ribosyl)acetamidine + L-glutamate + ADP + phosphate + H(+). The protein operates within purine metabolism; IMP biosynthesis via de novo pathway; 5-amino-1-(5-phospho-D-ribosyl)imidazole from N(2)-formyl-N(1)-(5-phospho-D-ribosyl)glycinamide: step 1/2. Its function is as follows. Part of the phosphoribosylformylglycinamidine synthase complex involved in the purines biosynthetic pathway. Catalyzes the ATP-dependent conversion of formylglycinamide ribonucleotide (FGAR) and glutamine to yield formylglycinamidine ribonucleotide (FGAM) and glutamate. The FGAM synthase complex is composed of three subunits. PurQ produces an ammonia molecule by converting glutamine to glutamate. PurL transfers the ammonia molecule to FGAR to form FGAM in an ATP-dependent manner. PurS interacts with PurQ and PurL and is thought to assist in the transfer of the ammonia molecule from PurQ to PurL. The chain is Phosphoribosylformylglycinamidine synthase subunit PurL from Helicobacter hepaticus (strain ATCC 51449 / 3B1).